We begin with the raw amino-acid sequence, 938 residues long: Protein O-mannosyl-transferase Tmtc2 (938 aa).

Position 1 (methionine 1) is a topological domain, cytoplasmic. Residues proline 2–leucine 22 form a helical membrane-spanning segment. The Extracellular portion of the chain corresponds to arginine 23–threonine 34. The helical transmembrane segment at cysteine 35–valine 55 threads the bilayer. Topologically, residues tyrosine 56 to tyrosine 108 are cytoplasmic. The helical transmembrane segment at leucine 109 to valine 129 threads the bilayer. At alanine 130 to arginine 139 the chain is on the extracellular side. Residues threonine 140 to isoleucine 160 form a helical membrane-spanning segment. Over histidine 161–alanine 164 the chain is Cytoplasmic. Residues valine 165–leucine 185 form a helical membrane-spanning segment. Residues serine 186 to threonine 208 are Extracellular-facing. The chain crosses the membrane as a helical span at residues leucine 209–cysteine 229. Over alanine 230–serine 249 the chain is Cytoplasmic. A helical membrane pass occupies residues valine 250 to glycine 270. Over proline 271 to arginine 291 the chain is Extracellular. A helical membrane pass occupies residues leucine 292–leucine 312. Topologically, residues serine 313–serine 510 are cytoplasmic. The tract at residues arginine 450–serine 480 is disordered. Residues phenylalanine 511–alanine 531 form a helical membrane-spanning segment. The Extracellular portion of the chain corresponds to glutamate 532–arginine 533. Residues leucine 534 to methionine 554 traverse the membrane as a helical segment. Residues serine 555 to asparagine 562 lie on the Cytoplasmic side of the membrane. The helical transmembrane segment at isoleucine 563–leucine 580 threads the bilayer. Over arginine 581–valine 938 the chain is Extracellular. 9 TPR repeats span residues proline 602 to methionine 635, alanine 636 to leucine 669, alanine 670 to alanine 703, serine 715 to leucine 748, glutamate 753 to glutamine 786, alanine 788 to glutamine 821, alanine 822 to aspartate 855, tyrosine 856 to aspartate 889, and alanine 890 to aspartate 923. A glycan (N-linked (GlcNAc...) asparagine) is linked at asparagine 800.

The protein belongs to the TMTC family.

The protein resides in the membrane. It localises to the endoplasmic reticulum. It catalyses the reaction a di-trans,poly-cis-dolichyl beta-D-mannosyl phosphate + L-seryl-[protein] = 3-O-(alpha-D-mannosyl)-L-seryl-[protein] + a di-trans,poly-cis-dolichyl phosphate + H(+). The enzyme catalyses a di-trans,poly-cis-dolichyl beta-D-mannosyl phosphate + L-threonyl-[protein] = 3-O-(alpha-D-mannosyl)-L-threonyl-[protein] + a di-trans,poly-cis-dolichyl phosphate + H(+). It participates in protein modification; protein glycosylation. Its function is as follows. Transfers mannosyl residues to the hydroxyl group of serine or threonine residues. The chain is Protein O-mannosyl-transferase Tmtc2 from Drosophila melanogaster (Fruit fly).